We begin with the raw amino-acid sequence, 158 residues long: uncharacterized protein (158 aa).

This sequence belongs to the mimivirus L223/L227/L812 family.

This is an uncharacterized protein from Acanthamoeba polyphaga mimivirus (APMV).